Reading from the N-terminus, the 988-residue chain is Kinesin-like protein CIN8 (988 aa).

Positions 33–470 (NILVAVRCRG…LEYASKAKNI (438 aa)) constitute a Kinesin motor domain. Residue 125–132 (GMTSTGKT) coordinates ATP. The interval 206–301 (FDSNVNGTSA…NSNNTNQQQS (96 aa)) is disordered. A compositionally biased stretch (low complexity) spans 208-237 (SNVNGTSASGSSSRSSSRNNSPRSAPDNSR). The segment covering 248–280 (HNTTGNSKISNNNHNKFSRFKQTSQESTRAHAS) has biased composition (polar residues). Residues 281 to 301 (NNHQNVHIPNNNSNNTNQQQS) are compositionally biased toward low complexity. Coiled coils occupy residues 514-619 (EHYK…ELQQ) and 707-769 (KLAE…MQNF). Residues 965–974 (ALQEKRKPED) are compositionally biased toward basic and acidic residues. The segment at 965–988 (ALQEKRKPEDEVLLQAKLQRRNPD) is disordered.

It belongs to the TRAFAC class myosin-kinesin ATPase superfamily. Kinesin family. BimC subfamily.

The protein localises to the cytoplasm. Its subcellular location is the cytoskeleton. The protein resides in the spindle. Functionally, elongates the mitotic spindle by interacting with spindle microtubules to generate an outward force pushing spindle poles apart. Following spindle assembly, CIN8 and KIP1 apparently act to oppose a force, possibly generated by KAR3, that draws separated poles back together. The protein is Kinesin-like protein CIN8 (CIN8) of Candida glabrata (strain ATCC 2001 / BCRC 20586 / JCM 3761 / NBRC 0622 / NRRL Y-65 / CBS 138) (Yeast).